Here is an 860-residue protein sequence, read N- to C-terminus: Leucine--tRNA ligase (860 aa).

Residues 42–52 carry the 'HIGH' region motif; that stretch reads PYPSGRLHMGH. A 'KMSKS' region motif is present at residues 619–623; it reads KMSKS. K622 provides a ligand contact to ATP.

The protein belongs to the class-I aminoacyl-tRNA synthetase family.

The protein resides in the cytoplasm. It carries out the reaction tRNA(Leu) + L-leucine + ATP = L-leucyl-tRNA(Leu) + AMP + diphosphate. The polypeptide is Leucine--tRNA ligase (Proteus mirabilis (strain HI4320)).